Here is a 235-residue protein sequence, read N- to C-terminus: Glucosamine-6-phosphate deaminase (235 aa).

Residue D62 is the Proton acceptor; for enolization step of the active site. The active-site For ring-opening step is N128. H130 (proton acceptor; for ring-opening step) is an active-site residue. Catalysis depends on E135, which acts as the For ring-opening step.

Belongs to the glucosamine/galactosamine-6-phosphate isomerase family. NagB subfamily.

It carries out the reaction alpha-D-glucosamine 6-phosphate + H2O = beta-D-fructose 6-phosphate + NH4(+). It functions in the pathway amino-sugar metabolism; N-acetylneuraminate degradation; D-fructose 6-phosphate from N-acetylneuraminate: step 5/5. Catalyzes the reversible isomerization-deamination of glucosamine 6-phosphate (GlcN6P) to form fructose 6-phosphate (Fru6P) and ammonium ion. The sequence is that of Glucosamine-6-phosphate deaminase from Latilactobacillus sakei subsp. sakei (strain 23K) (Lactobacillus sakei subsp. sakei).